The following is a 56-amino-acid chain: Turripeptide XIV-01 (56 aa).

A signal peptide spans 1–21 (MRFHVLLTVALLLTSLMSIEA). Residues 22-30 (KPVNGAEME) constitute a propeptide that is removed on maturation.

In terms of processing, contains 2 disulfide bonds. As to expression, expressed by the venom duct.

It is found in the secreted. The chain is Turripeptide XIV-01 from Gemmula speciosa (Splendid gem-turris).